We begin with the raw amino-acid sequence, 475 residues long: MNTALAQQIANEGGVEAWMIAQQHKSLLRFLTCGSVDDGKSTLIGRLLHDTRQIYEDQLSSLHNDSKRHGTQGEKLDLALLVDGLQAEREQGITIDVAYRYFSTEKRKFIIADTPGHEQYTRNMATGASTCELAILLIDARKGVLDQTRRHSFISTLLGIKHLVVAINKMDLVDYSEETFTRIREDYLTFAGQLPGNLDIRFVPLSALEGDNVASQSESMSWYSGPTLLEVLETVEIQRVVDAQPMRFPVQYVNRPNLDFRGYAGTLASGRVEVGQRVKVLPSGVESNVARIVTFDGDREEAFAGEAITLVLTDEIDISRGDLLLAADEALPAVQSASVDVVWMAEQPLSPGQSYDIKIAGKKTRARVDGIRYQVDINNLTQREVENLPLNGIGLVDLTFDEPLVLDRYQQNPVTGGLIFIDRLSNVTVGAGMVHEPKNEAAVASSEFSAFELELNALVRRHFPHWGARDLLGDK.

A tr-type G domain is found at 25 to 239 (KSLLRFLTCG…EVLETVEIQR (215 aa)). The G1 stretch occupies residues 34–41 (GSVDDGKS). 34 to 41 (GSVDDGKS) is a GTP binding site. The interval 92-96 (GITID) is G2. The tract at residues 113-116 (DTPG) is G3. Residues 113–117 (DTPGH) and 168–171 (NKMD) each bind GTP. Residues 168–171 (NKMD) are G4. The tract at residues 206-208 (SAL) is G5.

It belongs to the TRAFAC class translation factor GTPase superfamily. Classic translation factor GTPase family. CysN/NodQ subfamily. As to quaternary structure, heterodimer composed of CysD, the smaller subunit, and CysN.

It carries out the reaction sulfate + ATP + H(+) = adenosine 5'-phosphosulfate + diphosphate. The protein operates within sulfur metabolism; hydrogen sulfide biosynthesis; sulfite from sulfate: step 1/3. Functionally, with CysD forms the ATP sulfurylase (ATPS) that catalyzes the adenylation of sulfate producing adenosine 5'-phosphosulfate (APS) and diphosphate, the first enzymatic step in sulfur assimilation pathway. APS synthesis involves the formation of a high-energy phosphoric-sulfuric acid anhydride bond driven by GTP hydrolysis by CysN coupled to ATP hydrolysis by CysD. In Shigella boydii serotype 18 (strain CDC 3083-94 / BS512), this protein is Sulfate adenylyltransferase subunit 1.